Reading from the N-terminus, the 101-residue chain is Acylphosphatase (101 aa).

The 89-residue stretch at 11–99 (SWLVKAIGRV…PRLNRFDRLP (89 aa)) folds into the Acylphosphatase-like domain. Residues Arg-26 and Asn-44 contribute to the active site.

This sequence belongs to the acylphosphatase family.

It catalyses the reaction an acyl phosphate + H2O = a carboxylate + phosphate + H(+). The protein is Acylphosphatase (acyP) of Polaromonas naphthalenivorans (strain CJ2).